Here is a 95-residue protein sequence, read N- to C-terminus: Small ribosomal subunit protein uS17 (95 aa).

Belongs to the universal ribosomal protein uS17 family. Part of the 30S ribosomal subunit.

Functionally, one of the primary rRNA binding proteins, it binds specifically to the 5'-end of 16S ribosomal RNA. The protein is Small ribosomal subunit protein uS17 of Phytoplasma australiense.